Reading from the N-terminus, the 185-residue chain is NADH-quinone oxidoreductase subunit B (185 aa).

Cysteine 38, cysteine 39, cysteine 104, and cysteine 133 together coordinate [4Fe-4S] cluster. Residues 165–176 (AAEAYREEERQA) are compositionally biased toward basic and acidic residues. A disordered region spans residues 165 to 185 (AAEAYREEERQAARSALGPRS).

Belongs to the complex I 20 kDa subunit family. As to quaternary structure, NDH-1 is composed of 14 different subunits. Subunits NuoB, C, D, E, F, and G constitute the peripheral sector of the complex. It depends on [4Fe-4S] cluster as a cofactor.

The protein localises to the cell membrane. The enzyme catalyses a quinone + NADH + 5 H(+)(in) = a quinol + NAD(+) + 4 H(+)(out). Its function is as follows. NDH-1 shuttles electrons from NADH, via FMN and iron-sulfur (Fe-S) centers, to quinones in the respiratory chain. The immediate electron acceptor for the enzyme in this species is believed to be ubiquinone. Couples the redox reaction to proton translocation (for every two electrons transferred, four hydrogen ions are translocated across the cytoplasmic membrane), and thus conserves the redox energy in a proton gradient. This is NADH-quinone oxidoreductase subunit B from Thermomicrobium roseum (strain ATCC 27502 / DSM 5159 / P-2).